The chain runs to 305 residues: Cell division control protein 2 homolog C (305 aa).

The region spanning 4–297 is the Protein kinase domain; it reads YEKLEKVGEG…AKAALDHPYF (294 aa). Residues 10–18 and K33 each bind ATP; that span reads VGEGTYGKV. T14 is modified (phosphothreonine). Y15 carries the phosphotyrosine modification. D138 acts as the Proton acceptor in catalysis. T172 is subject to Phosphothreonine; by CAK.

Belongs to the protein kinase superfamily. CMGC Ser/Thr protein kinase family. CDC2/CDKX subfamily.

The enzyme catalyses L-seryl-[protein] + ATP = O-phospho-L-seryl-[protein] + ADP + H(+). It carries out the reaction L-threonyl-[protein] + ATP = O-phospho-L-threonyl-[protein] + ADP + H(+). It catalyses the reaction [DNA-directed RNA polymerase] + ATP = phospho-[DNA-directed RNA polymerase] + ADP + H(+). Functionally, plays a key role in the control of the eukaryotic cell cycle. The chain is Cell division control protein 2 homolog C (CDC2C) from Antirrhinum majus (Garden snapdragon).